Consider the following 136-residue polypeptide: Large ribosomal subunit protein bL19 (136 aa).

The protein belongs to the bacterial ribosomal protein bL19 family.

In terms of biological role, this protein is located at the 30S-50S ribosomal subunit interface and may play a role in the structure and function of the aminoacyl-tRNA binding site. This chain is Large ribosomal subunit protein bL19, found in Xylella fastidiosa (strain 9a5c).